Here is a 417-residue protein sequence, read N- to C-terminus: Ribonuclease T2-like (417 aa).

The signal sequence occupies residues 1–22; the sequence is MSSISGFLGAIPGAQQILQTMA. Disulfide bonds link Cys45–Cys63, Cys52–Cys99, Cys62–Cys165, Cys107–Cys157, and Cys229–Cys264. Residue His92 is part of the active site. Residue Asn115 is glycosylated (N-linked (GlcNAc...) asparagine). Residues Glu150 and His154 contribute to the active site. The interval 274-296 is disordered; that stretch reads KTPNKDPGHGHEPTKTRHPHGPT. Residues 276–288 show a composition bias toward basic and acidic residues; that stretch reads PNKDPGHGHEPTK. Residue Asn383 is glycosylated (N-linked (GlcNAc...) asparagine).

Belongs to the RNase T2 family.

The protein localises to the vacuole lumen. It localises to the cytoplasm. It carries out the reaction a ribonucleotidyl-ribonucleotide-RNA + H2O = a 3'-end 3'-phospho-ribonucleotide-RNA + a 5'-end dephospho-ribonucleoside-RNA + H(+). In terms of biological role, rnase which modulates cell survival under stress conditions. Released from the vacuole to the cytoplasm during stress to promote tRNA and rRNA cleavage and to activate separately a downstream pathway that promotes cell death. Involved in cell size, vacuolar morphology and growth at high temperatures and high salt concentration. This Emericella nidulans (strain FGSC A4 / ATCC 38163 / CBS 112.46 / NRRL 194 / M139) (Aspergillus nidulans) protein is Ribonuclease T2-like (rny1).